We begin with the raw amino-acid sequence, 299 residues long: Lymphocyte antigen 6 complex locus protein G6f (299 aa).

An N-terminal signal peptide occupies residues Met1 to Thr19. Positions Asp20–Asp124 constitute an Ig-like V-type domain. Topologically, residues Asp20 to Trp237 are extracellular. Cys37 and Cys108 are joined by a disulfide. The N-linked (GlcNAc...) asparagine glycan is linked to Asn90. A helical membrane pass occupies residues Ile238 to Leu258. Over Trp259–Arg299 the chain is Cytoplasmic. Phosphotyrosine is present on Tyr283.

As to quaternary structure, homodimer; disulfide-linked. Interacts with GRB2 and GRB7 in a phosphorylation-dependent manner. In terms of processing, N-glycosylated.

The protein resides in the cell membrane. May play a role in the downstream signal transduction pathways involving GRB2 and GRB7. This Bos taurus (Bovine) protein is Lymphocyte antigen 6 complex locus protein G6f (LY6G6F).